The primary structure comprises 1457 residues: ABC transporter G family member 36 (1457 aa).

A disordered region spans residues 14–43 (RLGGSMRGDSGSMWRRGDDVFSRSSREEDD). A compositionally biased stretch (basic and acidic residues) spans 28–39 (RRGDDVFSRSSR). An ABC transporter 1 domain is found at 164-437 (GNALGILPNR…FESMGFKCPD (274 aa)). ATP is bound at residue 197 to 204 (GPPGSGKT). Residues 515-728 (ELLKANIDRE…AQNAISVNEL (214 aa)) form the ABC transmembrane type-2 1 domain. 7 helical membrane-spanning segments follow: residues 533–553 (FVYM…MTLF), 565–585 (SGGI…FNGF), 621–641 (IPIT…VIGF), 653–673 (LLML…GGAA), 677–697 (IVAN…GGFI), 706–726 (WWIW…ISVN), and 765–785 (IGFG…TLAL). Residues 821 to 841 (SSGSTRRPMGNGTENDSTIVD) are disordered. Positions 860-1112 (LSFDNVRYSV…ELIKYFESIP (253 aa)) constitute an ABC transporter 2 domain. ATP is bound at residue 905-912 (GVSGAGKT). Residues 1185–1399 (TQCMACLWKQ…TLYGLVVSQF (215 aa)) enclose the ABC transmembrane type-2 2 domain. The next 7 helical transmembrane spans lie at 1209 to 1229 (FFFT…LGGK), 1244 to 1264 (YAAV…VVAV), 1292 to 1312 (IPYT…MIGF), 1319 to 1339 (FFWY…YGMM), 1349 to 1369 (IASI…GFVI), 1380 to 1400 (WYCW…SQFG), and 1429 to 1449 (WVAT…GFAI).

This sequence belongs to the ABC transporter superfamily. ABCG family. PDR (TC 3.A.1.205) subfamily.

Its subcellular location is the membrane. In terms of biological role, may be a general defense protein. In Oryza sativa subsp. japonica (Rice), this protein is ABC transporter G family member 36.